A 59-amino-acid chain; its full sequence is Large ribosomal subunit protein uL30 (59 aa).

This sequence belongs to the universal ribosomal protein uL30 family. As to quaternary structure, part of the 50S ribosomal subunit.

The chain is Large ribosomal subunit protein uL30 from Geotalea daltonii (strain DSM 22248 / JCM 15807 / FRC-32) (Geobacter daltonii).